A 209-amino-acid chain; its full sequence is ATP-dependent Clp protease proteolytic subunit (209 aa).

Ser106 functions as the Nucleophile in the catalytic mechanism. His131 is a catalytic residue.

The protein belongs to the peptidase S14 family. Fourteen ClpP subunits assemble into 2 heptameric rings which stack back to back to give a disk-like structure with a central cavity, resembling the structure of eukaryotic proteasomes.

The protein resides in the cytoplasm. It catalyses the reaction Hydrolysis of proteins to small peptides in the presence of ATP and magnesium. alpha-casein is the usual test substrate. In the absence of ATP, only oligopeptides shorter than five residues are hydrolyzed (such as succinyl-Leu-Tyr-|-NHMec, and Leu-Tyr-Leu-|-Tyr-Trp, in which cleavage of the -Tyr-|-Leu- and -Tyr-|-Trp bonds also occurs).. Cleaves peptides in various proteins in a process that requires ATP hydrolysis. Has a chymotrypsin-like activity. Plays a major role in the degradation of misfolded proteins. This Caulobacter vibrioides (strain ATCC 19089 / CIP 103742 / CB 15) (Caulobacter crescentus) protein is ATP-dependent Clp protease proteolytic subunit.